Reading from the N-terminus, the 360-residue chain is Phospho-N-acetylmuramoyl-pentapeptide-transferase (360 aa).

10 consecutive transmembrane segments (helical) span residues 26–46 (AIVS…RLIA), 72–92 (PTMG…LWAY), 94–114 (SNPY…VGFV), 132–152 (WKYF…YITG), 168–188 (VMPQ…VGTG), 199–219 (GLAI…AWAT), 236–256 (AGEL…FLWF), 263–283 (VFMG…IAVL), 288–308 (FLLV…ILQV), and 338–358 (VIVR…ATLK).

The protein belongs to the glycosyltransferase 4 family. MraY subfamily. Requires Mg(2+) as cofactor.

The protein resides in the cell inner membrane. It catalyses the reaction UDP-N-acetyl-alpha-D-muramoyl-L-alanyl-gamma-D-glutamyl-meso-2,6-diaminopimeloyl-D-alanyl-D-alanine + di-trans,octa-cis-undecaprenyl phosphate = di-trans,octa-cis-undecaprenyl diphospho-N-acetyl-alpha-D-muramoyl-L-alanyl-D-glutamyl-meso-2,6-diaminopimeloyl-D-alanyl-D-alanine + UMP. The protein operates within cell wall biogenesis; peptidoglycan biosynthesis. Catalyzes the initial step of the lipid cycle reactions in the biosynthesis of the cell wall peptidoglycan: transfers peptidoglycan precursor phospho-MurNAc-pentapeptide from UDP-MurNAc-pentapeptide onto the lipid carrier undecaprenyl phosphate, yielding undecaprenyl-pyrophosphoryl-MurNAc-pentapeptide, known as lipid I. This is Phospho-N-acetylmuramoyl-pentapeptide-transferase from Cronobacter sakazakii (strain ATCC BAA-894) (Enterobacter sakazakii).